Here is a 200-residue protein sequence, read N- to C-terminus: NAD(P)H dehydrogenase (quinone) (200 aa).

Residues 4–191 form the Flavodoxin-like domain; the sequence is VLVLYYSSYG…DIARYQGKHV (188 aa). FMN contacts are provided by residues 10-15 and 79-81; these read SSYGHV and TRF. Tyrosine 12 provides a ligand contact to NAD(+). Tryptophan 99 provides a ligand contact to substrate. FMN is bound by residues 114–120 and histidine 135; that span reads STGTQHG.

Belongs to the WrbA family. It depends on FMN as a cofactor.

The enzyme catalyses a quinone + NADH + H(+) = a quinol + NAD(+). It catalyses the reaction a quinone + NADPH + H(+) = a quinol + NADP(+). This is NAD(P)H dehydrogenase (quinone) from Burkholderia multivorans (strain ATCC 17616 / 249).